Here is a 418-residue protein sequence, read N- to C-terminus: PP2A regulatory subunit TAP46 (418 aa).

A disordered region spans residues Lys367 to Gly418. Composition is skewed to basic and acidic residues over residues Trp376 to Gln385 and Glu393 to Pro406.

Belongs to the IGBP1/TAP42 family.

Functionally, involved in the regulation of the TOR signaling pathway. Seems to act as a regulator of PP2A catalytic activity. This Oryza sativa subsp. japonica (Rice) protein is PP2A regulatory subunit TAP46.